Reading from the N-terminus, the 102-residue chain is Omega-hexatoxin-Hi2b (102 aa).

An N-terminal signal peptide occupies residues 1 to 23; that stretch reads MKFSKLSLTLALILTQAIFVLCG. Positions 24–56 are excised as a propeptide; it reads KINEDFMENGLESHALHDEIRKPIDTEKADAER. 3 disulfide bridges follow: Cys-61/Cys-75, Cys-68/Cys-81, and Cys-74/Cys-86. Leucine amide is present on Leu-98. The propeptide occupies 100–102; the sequence is RAL.

Belongs to the neurotoxin 15 family. 02 (omega-actx) subfamily. In terms of tissue distribution, expressed by the venom gland.

It localises to the secreted. Its function is as follows. Potent inhibitor of insect, but not mammalian, voltage-gated calcium channels (Cav). The polypeptide is Omega-hexatoxin-Hi2b (Hadronyche infensa (Fraser island funnel-web spider)).